Reading from the N-terminus, the 149-residue chain is Calmodulin (149 aa).

The residue at position 2 (threonine 2) is an N-acetylthreonine. EF-hand domains are found at residues 8 to 43 (EQIA…LGQN), 44 to 79 (PTEA…KMKE), 81 to 116 (DSEE…LGEK), and 117 to 149 (LTDE…MTSK). Residues aspartate 21, aspartate 23, aspartate 25, threonine 27, glutamate 32, aspartate 57, aspartate 59, asparagine 61, threonine 63, glutamate 68, aspartate 94, aspartate 96, asparagine 98, and glutamate 105 each coordinate Ca(2+). Lysine 116 carries the N6,N6,N6-trimethyllysine modification. Ca(2+) contacts are provided by aspartate 130, aspartate 132, aspartate 134, glutamine 136, and glutamate 141.

It belongs to the calmodulin family.

Calmodulin mediates the control of a large number of enzymes, ion channels and other proteins by Ca(2+). Among the enzymes to be stimulated by the calmodulin-Ca(2+) complex are a number of protein kinases and phosphatases. The sequence is that of Calmodulin from Halichondria okadai (Marine sponge).